The chain runs to 186 residues: Putative transcriptional regulator encoded by LINC00473 (186 aa).

The interval 1–62 is disordered; that stretch reads MELSAAAGRR…RDCTPTCTNA (62 aa). Over residues 18–40 the composition is skewed to basic and acidic residues; the sequence is FTGRHRTERSQERGSTPRKERSM.

May play a role in cAMP-mediated gene transcription. This chain is Putative transcriptional regulator encoded by LINC00473 (LINC00473), found in Homo sapiens (Human).